Here is a 227-residue protein sequence, read N- to C-terminus: Cytidylate kinase (227 aa).

ATP is bound at residue 7–15 (GPSGAGKGT).

The protein belongs to the cytidylate kinase family. Type 1 subfamily.

Its subcellular location is the cytoplasm. The catalysed reaction is CMP + ATP = CDP + ADP. The enzyme catalyses dCMP + ATP = dCDP + ADP. This chain is Cytidylate kinase, found in Actinobacillus succinogenes (strain ATCC 55618 / DSM 22257 / CCUG 43843 / 130Z).